A 145-amino-acid polypeptide reads, in one-letter code: Trafficking protein particle complex subunit 1 (145 aa).

It belongs to the TRAPP small subunits family. BET5 subfamily. Part of the multisubunit transport protein particle (TRAPP) complex. The heterodimer TRAPPC6B-TRAPPC3 interacts with TRAPPC1 likely providing a core for TRAPP complex formation.

It localises to the golgi apparatus. Its subcellular location is the cis-Golgi network. The protein resides in the endoplasmic reticulum. Its function is as follows. May play a role in vesicular transport from endoplasmic reticulum to Golgi. The chain is Trafficking protein particle complex subunit 1 (TRAPPC1) from Bos taurus (Bovine).